A 756-amino-acid chain; its full sequence is MDLRTMTQSLVTLAEDNMAFFSSQGPGETARRLTGVFAGIREQALGLEPALGRLLSVAHLFDLDTETPANGYRSLVHTARCCLAHLLHKSRYVASNRRSIFFRTSHNLAELEAYLAALTQLRALAYYAQRLLTTNQPGRLFFEGDERVIADFLREYVTLHKGCFYGRCLGFQFTPAIRPFLQTISIGLVSFGEHYKRNETGISVTASSLFTDGRFAIDPELRGAEFERIIQNLDVHFWKAFWNITEIQVLSSLANMASTTVRVSRLLSLPPVAFEMPLTSDPELTVTISPPLAHTGPGPVLVRLISYDLREGQDSKELSSFVRSEGPRSLELRLRPQQAPRSRALVVHIHGGGFVAQTSKSHEPYLKSWAQELGAPILSIDYSLAPEAPFPRALEECFYAYCWAVKHCALLGSTGERICLAGDSAGGNLCFTVSLRAAAYGVRVPDGIMAAYPATMLQSTASPSRLLSLMDHLLPLSVLSKCVSTYAGAETEDHPDSDQKALGVMGLVQRDTALLLRDLRLGASSWLNSFLELGGQKSHLKSVSKTEPMRRSVSEAALTQPEGSLGTDSLKSLKLHDLGLRNSSDTTDTPELSLSAETLGPSAPSTINFLLGSEDGSEMSKAPEELNNKDRVRGVGAAFPEGFHPRRCSQGAMWMPLYSAPIVKNPSMSPLLAPDSMLQTLPPVHIVACALDPMLDDSVMFARRLRGLGQPVTLRVAEDLPHGFLSLAALCRETRQAAALCVERIRLILNLPGPPV.

Positions 350–352 match the Involved in the stabilization of the negatively charged intermediate by the formation of the oxyanion hole motif; sequence HGG. Ser-424 is an active-site residue. 2 disordered regions span residues 542-570 and 581-600; these read SVSK…TDSL and RNSS…ETLG. Ser-552 is subject to Phosphoserine; by PKA. A Phosphoserine; by AMPK modification is found at Ser-554. Over residues 581 to 596 the composition is skewed to polar residues; that stretch reads RNSSDTTDTPELSLSA. Ser-595 and Ser-649 each carry phosphoserine. Residues Asp-692 and His-722 contribute to the active site.

The protein belongs to the 'GDXG' lipolytic enzyme family. Monomer and homodimer. Interacts with CAVIN1 in the adipocyte cytoplasm. Interacts with PLIN5. In terms of processing, phosphorylation by AMPK reduces its translocation towards the lipid droplets.

It is found in the cell membrane. The protein localises to the membrane. The protein resides in the caveola. It localises to the cytoplasm. Its subcellular location is the cytosol. It is found in the lipid droplet. It carries out the reaction a diacylglycerol + H2O = a monoacylglycerol + a fatty acid + H(+). The catalysed reaction is a triacylglycerol + H2O = a diacylglycerol + a fatty acid + H(+). It catalyses the reaction a monoacylglycerol + H2O = glycerol + a fatty acid + H(+). The enzyme catalyses Hydrolyzes glycerol monoesters of long-chain fatty acids.. It carries out the reaction 1,2-di-(9Z-octadecenoyl)-glycerol + (9Z)-octadecenoate + H(+) = 1,2,3-tri-(9Z-octadecenoyl)-glycerol + H2O. The catalysed reaction is 2,3-di-(9Z)-octadecenoyl-sn-glycerol + H2O = 2-(9Z-octadecenoyl)-glycerol + (9Z)-octadecenoate + H(+). It catalyses the reaction cholesteryl (9Z-octadecenoate) + H2O = cholesterol + (9Z)-octadecenoate + H(+). The enzyme catalyses 1,2,3-tri-(9Z-octadecenoyl)-glycerol + H2O = di-(9Z)-octadecenoylglycerol + (9Z)-octadecenoate + H(+). It carries out the reaction all-trans-retinyl hexadecanoate + H2O = all-trans-retinol + hexadecanoate + H(+). The catalysed reaction is 1,2-di-(9Z-octadecenoyl)-glycerol + H2O = (9Z-octadecenoyl)-glycerol + (9Z)-octadecenoate + H(+). It catalyses the reaction 2-(5Z,8Z,11Z,14Z-eicosatetraenoyl)-glycerol + H2O = glycerol + (5Z,8Z,11Z,14Z)-eicosatetraenoate + H(+). The enzyme catalyses 1-(9Z-octadecenoyl)-glycerol + H2O = glycerol + (9Z)-octadecenoate + H(+). It carries out the reaction 2-(9Z-octadecenoyl)-glycerol + H2O = glycerol + (9Z)-octadecenoate + H(+). The catalysed reaction is 1-O-hexadecyl-2-acetyl-sn-glycerol + H2O = 1-O-hexadecyl-sn-glycerol + acetate + H(+). It catalyses the reaction 1,2-di-(9Z-octadecenoyl)-sn-glycerol + H2O = (9Z-octadecenoyl)-glycerol + (9Z)-octadecenoate + H(+). The enzyme catalyses 1,3-di-(9Z-octadecenoyl)-glycerol + H2O = 1-(9Z-octadecenoyl)-glycerol + (9Z)-octadecenoate + H(+). It carries out the reaction 1,2-di-(9Z-octadecenoyl)-glycerol + H2O = 2-(9Z-octadecenoyl)-glycerol + (9Z)-octadecenoate + H(+). Its pathway is glycerolipid metabolism; triacylglycerol degradation. Functionally, lipase with broad substrate specificity, catalyzing the hydrolysis of triacylglycerols (TAGs), diacylglycerols (DAGs), monoacylglycerols (MAGs), cholesteryl esters and retinyl esters. Shows a preferential hydrolysis of DAGs over TAGs and MAGs. Preferentially hydrolyzes fatty acid (FA) esters at the sn-3 position of the glycerol backbone in DAGs and FA esters at the sn-1 and sn-2 positions of the glycerol backbone in TAGs. Catalyzes the hydrolysis of 2-arachidonoylglycerol, an endocannabinoid and of 2-acetyl monoalkylglycerol ether, the penultimate precursor of the pathway for de novo synthesis of platelet-activating factor. In adipose tissue and heart, it primarily hydrolyzes stored triglycerides to free fatty acids, while in steroidogenic tissues, it principally converts cholesteryl esters to free cholesterol for steroid hormone production. The protein is Hormone-sensitive lipase (LIPE) of Bos taurus (Bovine).